The sequence spans 107 residues: Ribosome-associated factor Y (107 aa).

Positions 85 to 107 (LNKLQHKSESRRADERLKDSFEN) are disordered.

As to quaternary structure, associates mainly with 70S ribosomes.

During stationary phase, prevents 70S dimer formation, probably in order to regulate translation efficiency during transition between the exponential and the stationary phases. In addition, during environmental stress such as cold shock or excessive cell density at stationary phase, stabilizes the 70S ribosome against dissociation, inhibits translation initiation and increase translation accuracy. When normal growth conditions are restored, is quickly released from the ribosome. The protein is Ribosome-associated factor Y of Haemophilus influenzae (strain ATCC 51907 / DSM 11121 / KW20 / Rd).